The chain runs to 1082 residues: SURP and G-patch domain-containing protein 2 (1082 aa).

T7 bears the Phosphothreonine mark. Residues 65–97 (LSGSVAHSRDAGREGLRSDVFPGPSFRSSNPSI) are disordered. Residues 71 to 81 (HSRDAGREGLR) show a composition bias toward basic and acidic residues. S96 and S224 each carry phosphoserine. K228 participates in a covalent cross-link: Glycyl lysine isopeptide (Lys-Gly) (interchain with G-Cter in SUMO2). T275 is modified (phosphothreonine). S277 is modified (phosphoserine). K305 is covalently cross-linked (Glycyl lysine isopeptide (Lys-Gly) (interchain with G-Cter in SUMO2)). A phosphoserine mark is found at S315, S573, and S603. The SURP motif 1 repeat unit spans residues 590–633 (IDQLVKRVIEGSLSPKERTLLKEDPAYWFLSDENSLEYKYYKLK). K650 participates in a covalent cross-link: Glycyl lysine isopeptide (Lys-Gly) (interchain with G-Cter in SUMO2). Residues 694 to 779 (RRATTGTQTL…QTSSPCPSAD (86 aa)) form a disordered region. Low complexity predominate over residues 697 to 708 (TTGTQTLLSSGT). A compositionally biased stretch (basic and acidic residues) spans 727–738 (LPDRNDAAKDCP). S754 and S757 each carry phosphoserine. One copy of the SURP motif 2 repeat lies at 787–830 (TAEKLARFVAQVGPEIEQFSIENSTDNPDLWFLHDQNSSAFKFY). Disordered regions lie at residues 849-930 (NLHT…EAAE), 982-1002 (RIAY…PKDL), and 1030-1061 (LGSL…EHKE). Residue S863 is modified to Phosphoserine. 2 stretches are compositionally biased toward acidic residues: residues 868 to 877 (MEGEAEFEDE) and 885 to 904 (LESP…DGGE). Residues 990–999 (GRPMSKKKKP) are compositionally biased toward basic residues. The Nuclear localization signal motif lies at 995–1000 (KKKKPK). A G-patch domain is found at 1011–1057 (DKNLGFQMLQKMGWKEGHGLGSLGKGIREPVSVGTPSEGEGLGADGQ).

Detected in adult testis, and in fetal brain and kidney.

The protein localises to the nucleus. In terms of biological role, may play a role in mRNA splicing. This Homo sapiens (Human) protein is SURP and G-patch domain-containing protein 2 (SUGP2).